A 120-amino-acid polypeptide reads, in one-letter code: Ribonuclease P protein component (120 aa).

Belongs to the RnpA family. Consists of a catalytic RNA component (M1 or rnpB) and a protein subunit.

It catalyses the reaction Endonucleolytic cleavage of RNA, removing 5'-extranucleotides from tRNA precursor.. RNaseP catalyzes the removal of the 5'-leader sequence from pre-tRNA to produce the mature 5'-terminus. It can also cleave other RNA substrates such as 4.5S RNA. The protein component plays an auxiliary but essential role in vivo by binding to the 5'-leader sequence and broadening the substrate specificity of the ribozyme. The polypeptide is Ribonuclease P protein component (Latilactobacillus sakei subsp. sakei (strain 23K) (Lactobacillus sakei subsp. sakei)).